A 303-amino-acid chain; its full sequence is Bifunctional protein FolD (303 aa).

NADP(+)-binding positions include 169–171 (GRG), Thr196, and Val237.

Belongs to the tetrahydrofolate dehydrogenase/cyclohydrolase family. As to quaternary structure, homodimer.

It carries out the reaction (6R)-5,10-methylene-5,6,7,8-tetrahydrofolate + NADP(+) = (6R)-5,10-methenyltetrahydrofolate + NADPH. It catalyses the reaction (6R)-5,10-methenyltetrahydrofolate + H2O = (6R)-10-formyltetrahydrofolate + H(+). It functions in the pathway one-carbon metabolism; tetrahydrofolate interconversion. Catalyzes the oxidation of 5,10-methylenetetrahydrofolate to 5,10-methenyltetrahydrofolate and then the hydrolysis of 5,10-methenyltetrahydrofolate to 10-formyltetrahydrofolate. This is Bifunctional protein FolD from Micrococcus luteus (strain ATCC 4698 / DSM 20030 / JCM 1464 / CCM 169 / CCUG 5858 / IAM 1056 / NBRC 3333 / NCIMB 9278 / NCTC 2665 / VKM Ac-2230) (Micrococcus lysodeikticus).